A 513-amino-acid polypeptide reads, in one-letter code: Probable DNA ligase (513 aa).

Glu-213 contacts ATP. Catalysis depends on Lys-215, which acts as the N6-AMP-lysine intermediate. 6 residues coordinate ATP: Arg-220, Arg-235, Glu-264, Phe-304, Arg-376, and Lys-382.

The protein belongs to the ATP-dependent DNA ligase family. Mg(2+) serves as cofactor.

The enzyme catalyses ATP + (deoxyribonucleotide)n-3'-hydroxyl + 5'-phospho-(deoxyribonucleotide)m = (deoxyribonucleotide)n+m + AMP + diphosphate.. DNA ligase that seals nicks in double-stranded DNA during DNA replication, DNA recombination and DNA repair. The polypeptide is Probable DNA ligase (Anaeromyxobacter sp. (strain K)).